We begin with the raw amino-acid sequence, 332 residues long: Endonuclease 8-like 2 (332 aa).

Pro2 (schiff-base intermediate with DNA) is an active-site residue. Glu3 functions as the Proton donor in the catalytic mechanism. Residue Lys50 is the Proton donor; for beta-elimination activity of the active site. An N6-acetyllysine modification is found at Lys50. Residues Asp59–Asp121 are disordered. Phosphoserine is present on Ser68. Basic and acidic residues predominate over residues Pro74 to Ala84. The span at Gly94–Ser104 shows a compositional bias: polar residues. Lys154 carries the post-translational modification N6-acetyllysine. Asn231 contacts DNA. The FPG-type zinc finger occupies Gln284–Pro320. Residue Arg310 is the Proton donor; for delta-elimination activity of the active site.

It belongs to the FPG family. Binds EP300. As to expression, detected in testis, skeletal muscle, heart, brain, placenta, lung, pancreas, kidney and liver.

It localises to the nucleus. The catalysed reaction is 2'-deoxyribonucleotide-(2'-deoxyribose 5'-phosphate)-2'-deoxyribonucleotide-DNA = a 3'-end 2'-deoxyribonucleotide-(2,3-dehydro-2,3-deoxyribose 5'-phosphate)-DNA + a 5'-end 5'-phospho-2'-deoxyribonucleoside-DNA + H(+). Its activity is regulated as follows. Acetylation of Lys-50 leads to loss of DNA nicking activity. Acetylation of Lys-154 has no effect. Functionally, involved in base excision repair of DNA damaged by oxidation or by mutagenic agents. Has DNA glycosylase activity towards 5-hydroxyuracil and other oxidized derivatives of cytosine with a preference for mismatched double-stranded DNA (DNA bubbles). Has low or no DNA glycosylase activity towards thymine glycol, 2-hydroxyadenine, hypoxanthine and 8-oxoguanine. Has AP (apurinic/apyrimidinic) lyase activity and introduces nicks in the DNA strand. Cleaves the DNA backbone by beta-delta elimination to generate a single-strand break at the site of the removed base with both 3'- and 5'-phosphates. The chain is Endonuclease 8-like 2 (NEIL2) from Homo sapiens (Human).